A 97-amino-acid chain; its full sequence is Gibberellin-regulated protein 5 (97 aa).

A signal peptide spans 1–27; the sequence is MANCIRRNALFFLTLLFLLSVSNLVQA.

The protein belongs to the GASA family. Post-translationally, six disulfide bonds may be present. Expressed in roots, root hairs, vasculature of cotyledons and hypocotyls, shoot apex, leaf veins, stems, flower receptacles, pollen, filaments, anthers and siliques.

The protein resides in the secreted. Its subcellular location is the cell wall. It is found in the extracellular space. It localises to the extracellular matrix. Its function is as follows. Gibberellin-regulated protein that acts as a negative regulator of gibberellin-induced flowering and stem growth. May inhibit flowering and inflorescence growth via a pathway involving GAI and by enhancing FLC expression and repressing FT and LFY. Acts as a negative regulator in thermotolerance by resogulating both salicylic acid (SA) signaling and heat shock-protein accumulation. In Arabidopsis thaliana (Mouse-ear cress), this protein is Gibberellin-regulated protein 5 (GASA5).